The chain runs to 142 residues: Hydrogenase maturation factor HypA (142 aa).

Residue His2 participates in Ni(2+) binding. Residues Cys73, Cys76, Cys109, and Cys112 each coordinate Zn(2+).

This sequence belongs to the HypA/HybF family.

Functionally, involved in the maturation of [NiFe] hydrogenases. Required for nickel insertion into the metal center of the hydrogenase. This chain is Hydrogenase maturation factor HypA, found in Methanopyrus kandleri (strain AV19 / DSM 6324 / JCM 9639 / NBRC 100938).